Reading from the N-terminus, the 158-residue chain is VLISEVLVRNKLQVSEAEVNNISIRFLDRKSIVPQPAQTAVDLIVRGLIGSFAYSHRLNLSLERTPGTLVHGNQDGNSNLTIGRWSGTAGLIFQRYNSPLTASGNTHTETLLAKSATLELTDEQGLPVLSFAEVMQKCVNTHRSYVVGSVDSPLGPLR.

It belongs to the OEP80 (TC 1.B.33.2) family.

It localises to the plastid. Its subcellular location is the chloroplast outer membrane. This chain is Outer envelope protein 80, chloroplastic (OEP80), found in Pisum sativum (Garden pea).